A 462-amino-acid chain; its full sequence is MTEFDTIAAISTPMGEGAIAIVRLSGDEAVEIADRLFRSPTGKQLKDVPSHTIHYGHIVDPKSGRIVEEVMVSVMRAPKTFTREDVVEINCHGGFVSVNRVLQLVLANGARLAEPGEFTKRAFLNGRIDLSQAEAVIDLIRAKTDRAMNVALQQMEGRLSKLIRELRQTILETLAHVEVNIDYPEYDDVEEMTPRLLKEKAEYVRGQIEKLLSTATQGKILREGLATVIIGRPNVGKSSLLNALAHENRAIVTDIPGTTRDVIEEYVNVRGVPLRLIDTAGIRETEDIVERIGVERSRQMLKKADLILLVLNYHEPLTEEDERLFAMTEGMDVIVIVNKTDLPQNIDIERVKELAAGRPIVATSLLCERGIDELEKAIADLFFGGELEAGDLTYVSNSRHIALLEQAKKAIEDALSGIDVGMPVDLVQIDLRRAWELLGEIVGDTVHESLIDQLFAQFCLGK.

R23, E88, and R127 together coordinate (6S)-5-formyl-5,6,7,8-tetrahydrofolate. Residues 224–383 (GLATVIIGRP…LEKAIADLFF (160 aa)) enclose the TrmE-type G domain. Residue N234 coordinates K(+). GTP is bound by residues 234–239 (NVGKSS), 253–259 (TDIPGTT), and 278–281 (DTAG). S238 contributes to the Mg(2+) binding site. T253, I255, and T258 together coordinate K(+). A Mg(2+)-binding site is contributed by T259. Residue K462 participates in (6S)-5-formyl-5,6,7,8-tetrahydrofolate binding.

The protein belongs to the TRAFAC class TrmE-Era-EngA-EngB-Septin-like GTPase superfamily. TrmE GTPase family. As to quaternary structure, homodimer. Heterotetramer of two MnmE and two MnmG subunits. K(+) is required as a cofactor.

The protein localises to the cytoplasm. In terms of biological role, exhibits a very high intrinsic GTPase hydrolysis rate. Involved in the addition of a carboxymethylaminomethyl (cmnm) group at the wobble position (U34) of certain tRNAs, forming tRNA-cmnm(5)s(2)U34. The protein is tRNA modification GTPase MnmE of Geobacillus thermodenitrificans (strain NG80-2).